The following is a 266-amino-acid chain: MATKILALLALLALFVSATNAFIIPQCSLAPSAIIPQFLRPVTSMGFEHLAVQAYKLQQALAASVLQQPINQLQQQSLAHLTIQTIATQQQQQFLPALSQLDVVNPVAYLQQQVLASNPLALANVAAYQQQQQLQQFLPALSQLAMVNPAAYLQQQQLLSSSPLVVGNAPTYLQQQLLQQIVPALTQLAVANPAAYLQQLLPFNQLTVSNSAAYLQQRQQLLNPLAVPNPLVTAFLQQQQLLPYSQFSLMNPALSWQQPIVGGAIF.

Residues 1-21 (MATKILALLALLALFVSATNA) form the signal peptide.

This sequence belongs to the zein family.

Its function is as follows. Zeins are major seed storage proteins. This is 22 kDa alpha-zein 8 from Zea mays (Maize).